Reading from the N-terminus, the 398-residue chain is RNA exonuclease 3 (398 aa).

One can recognise an Exonuclease domain in the interval 239-385; sequence VLALDCEMGF…QDAIAAMDII (147 aa).

Belongs to the REXO1/REXO3 family.

It localises to the cytoplasm. The protein localises to the nucleus. 3' to 5' exoribonuclease required for proper 3' end maturation of MRP RNA and of the U5L snRNA. In Candida glabrata (strain ATCC 2001 / BCRC 20586 / JCM 3761 / NBRC 0622 / NRRL Y-65 / CBS 138) (Yeast), this protein is RNA exonuclease 3 (REX3).